The following is a 550-amino-acid chain: Membrane protein insertase YidC (550 aa).

Transmembrane regions (helical) follow at residues 6–26 (LVLF…WLKQ), 333–353 (VVDY…LSWI), 356–376 (VVGN…LMFF), 430–450 (LPIL…LGSV), 469–489 (PYFI…KLNP), and 504–524 (PVIF…YWVV).

The protein belongs to the OXA1/ALB3/YidC family. Type 1 subfamily. In terms of assembly, interacts with the Sec translocase complex via SecD. Specifically interacts with transmembrane segments of nascent integral membrane proteins during membrane integration.

It is found in the cell inner membrane. Required for the insertion and/or proper folding and/or complex formation of integral membrane proteins into the membrane. Involved in integration of membrane proteins that insert both dependently and independently of the Sec translocase complex, as well as at least some lipoproteins. Aids folding of multispanning membrane proteins. This Aromatoleum aromaticum (strain DSM 19018 / LMG 30748 / EbN1) (Azoarcus sp. (strain EbN1)) protein is Membrane protein insertase YidC.